Reading from the N-terminus, the 204-residue chain is Imidazole glycerol phosphate synthase subunit HisH (204 aa).

The 200-residue stretch at 5–204 folds into the Glutamine amidotransferase type-1 domain; sequence KVVIIDTGCA…AKLIQNFLEL (200 aa). C80 functions as the Nucleophile in the catalytic mechanism. Catalysis depends on residues H186 and E188.

Heterodimer of HisH and HisF.

It is found in the cytoplasm. It catalyses the reaction 5-[(5-phospho-1-deoxy-D-ribulos-1-ylimino)methylamino]-1-(5-phospho-beta-D-ribosyl)imidazole-4-carboxamide + L-glutamine = D-erythro-1-(imidazol-4-yl)glycerol 3-phosphate + 5-amino-1-(5-phospho-beta-D-ribosyl)imidazole-4-carboxamide + L-glutamate + H(+). The catalysed reaction is L-glutamine + H2O = L-glutamate + NH4(+). It participates in amino-acid biosynthesis; L-histidine biosynthesis; L-histidine from 5-phospho-alpha-D-ribose 1-diphosphate: step 5/9. In terms of biological role, IGPS catalyzes the conversion of PRFAR and glutamine to IGP, AICAR and glutamate. The HisH subunit catalyzes the hydrolysis of glutamine to glutamate and ammonia as part of the synthesis of IGP and AICAR. The resulting ammonia molecule is channeled to the active site of HisF. The chain is Imidazole glycerol phosphate synthase subunit HisH from Vibrio parahaemolyticus serotype O3:K6 (strain RIMD 2210633).